Reading from the N-terminus, the 330-residue chain is Ferrochelatase (330 aa).

Residues H200 and E281 each contribute to the Fe cation site.

The protein belongs to the ferrochelatase family.

It localises to the cytoplasm. It catalyses the reaction heme b + 2 H(+) = protoporphyrin IX + Fe(2+). It participates in porphyrin-containing compound metabolism; protoheme biosynthesis; protoheme from protoporphyrin-IX: step 1/1. In terms of biological role, catalyzes the ferrous insertion into protoporphyrin IX. The polypeptide is Ferrochelatase (Marinomonas sp. (strain MWYL1)).